Consider the following 215-residue polypeptide: uncharacterized protein (215 aa).

Residues S114, D162, and H194 each act as charge relay system in the active site.

It belongs to the AB hydrolase superfamily. AB hydrolase 2 family.

This is an uncharacterized protein from Rickettsia prowazekii (strain Madrid E).